The sequence spans 435 residues: Serine--tRNA ligase (435 aa).

242 to 244 (TAE) contacts L-serine. Position 273-275 (273-275 (RSE)) interacts with ATP. L-serine is bound at residue Glu296. Residue 360–363 (EISS) participates in ATP binding. Residue Ser396 coordinates L-serine.

It belongs to the class-II aminoacyl-tRNA synthetase family. Type-1 seryl-tRNA synthetase subfamily. Homodimer. The tRNA molecule binds across the dimer.

The protein resides in the cytoplasm. The catalysed reaction is tRNA(Ser) + L-serine + ATP = L-seryl-tRNA(Ser) + AMP + diphosphate + H(+). It carries out the reaction tRNA(Sec) + L-serine + ATP = L-seryl-tRNA(Sec) + AMP + diphosphate + H(+). It participates in aminoacyl-tRNA biosynthesis; selenocysteinyl-tRNA(Sec) biosynthesis; L-seryl-tRNA(Sec) from L-serine and tRNA(Sec): step 1/1. Its function is as follows. Catalyzes the attachment of serine to tRNA(Ser). Is also able to aminoacylate tRNA(Sec) with serine, to form the misacylated tRNA L-seryl-tRNA(Sec), which will be further converted into selenocysteinyl-tRNA(Sec). The chain is Serine--tRNA ligase from Vibrio vulnificus (strain YJ016).